We begin with the raw amino-acid sequence, 377 residues long: Testis-expressed protein 13A (377 aa).

The interval 92 to 377 (WLQDLSSLHK…CGKGIWLQNP (286 aa)) is required for repression of transcription. The stretch at 122-156 (QKEVALQLQMAQAKLEEVQRERDLLRLKILQAELR) forms a coiled coil. Residues 142 to 165 (ERDLLRLKILQAELRALPNAVRPA) form an LRR repeat. Residues 345 to 369 (RPGDWDCPWCKAVNFSRRENCFHCG) form a RanBP2-type zinc finger. Positions 351, 354, 365, and 368 each coordinate Zn(2+).

The protein belongs to the TEX13 family. Interacts with CNOT1; the interaction may inhibit CNOT1 binding to mRNA and subsequently CNOT1-mediated mRNA degradation.

Functionally, binds to ssRNA containing the consensus sequence 5'-AGGUAA-3'. Plays a role in transcriptional repression. Required for rapid sperm motility and timely degradation of mRNA via its interaction with CNOT1. The sequence is that of Testis-expressed protein 13A from Mus musculus (Mouse).